The primary structure comprises 398 residues: Aspartate aminotransferase (398 aa).

The L-aspartate site is built by G36, W132, and N185. An N6-(pyridoxal phosphate)lysine modification is found at K248. Position 376 (R376) interacts with L-aspartate.

It belongs to the class-I pyridoxal-phosphate-dependent aminotransferase family. As to quaternary structure, homodimer. Requires pyridoxal 5'-phosphate as cofactor.

It localises to the cytoplasm. It carries out the reaction L-aspartate + 2-oxoglutarate = oxaloacetate + L-glutamate. In Pseudomonas aeruginosa (strain ATCC 15692 / DSM 22644 / CIP 104116 / JCM 14847 / LMG 12228 / 1C / PRS 101 / PAO1), this protein is Aspartate aminotransferase (aspC).